The primary structure comprises 306 residues: 2-phospho-L-lactate transferase (306 aa).

A 7,8-didemethyl-8-hydroxy-5-deazariboflavin-binding site is contributed by Asp48.

It belongs to the CofD family. Homodimer. It depends on Mg(2+) as a cofactor.

It catalyses the reaction (2S)-lactyl-2-diphospho-5'-guanosine + 7,8-didemethyl-8-hydroxy-5-deazariboflavin = oxidized coenzyme F420-0 + GMP + H(+). Its pathway is cofactor biosynthesis; coenzyme F420 biosynthesis. Its function is as follows. Catalyzes the transfer of the 2-phospholactate moiety from (2S)-lactyl-2-diphospho-5'-guanosine to 7,8-didemethyl-8-hydroxy-5-deazariboflavin (FO) with the formation of oxidized coenzyme F420-0 and GMP. This is 2-phospho-L-lactate transferase from Methanococcoides burtonii (strain DSM 6242 / NBRC 107633 / OCM 468 / ACE-M).